The following is a 338-amino-acid chain: Selenocysteine methyltransferase (338 aa).

Residues 1–327 (MSSPLITDFL…DTIRGIYKIL (327 aa)) form the Hcy-binding domain. Zn(2+)-binding residues include Cys245, Cys312, and Cys313.

Monomer. The cofactor is Zn(2+). In terms of tissue distribution, present in all tissues tested.

It catalyses the reaction S-methyl-L-methionine + L-selenocysteine = Se-methyl-L-selenocysteine + L-methionine + H(+). In terms of biological role, catalyzes the methylation of selenocysteine with S-methylmethionine as donor. Does not methylate cysteine. This is Selenocysteine methyltransferase (SMTA) from Astragalus bisulcatus (Two-grooved milkvetch).